The chain runs to 296 residues: Cobalamin trafficking protein CblD (296 aa).

The N-terminal 38 residues, 1–38 (MAHVLCNRARLVSYLPGFCSLVKRVINPRAFSTAGSSG), are a transit peptide targeting the mitochondrion. Lys203 bears the N6-acetyllysine mark.

As to quaternary structure, heterodimer with MMACHC. Forms a multiprotein complex with MMACHC, MTR and MTRR.

It localises to the cytoplasm. Its subcellular location is the mitochondrion. Its function is as follows. Involved in cobalamin metabolism and trafficking. Plays a role in regulating the biosynthesis and the proportion of two coenzymes, methylcob(III)alamin (MeCbl) and 5'-deoxyadenosylcobalamin (AdoCbl). Promotes oxidation of cob(II)alamin bound to MMACHC. The processing of cobalamin in the cytosol occurs in a multiprotein complex composed of at least MMACHC, MMADHC, MTRR (methionine synthase reductase) and MTR (methionine synthase) which may contribute to shuttle safely and efficiently cobalamin towards MTR in order to produce methionine. In Rattus norvegicus (Rat), this protein is Cobalamin trafficking protein CblD (Mmadhc).